The sequence spans 616 residues: Proline--tRNA ligase (616 aa).

Belongs to the class-II aminoacyl-tRNA synthetase family. ProS type 1 subfamily. Homodimer.

It is found in the cytoplasm. The catalysed reaction is tRNA(Pro) + L-proline + ATP = L-prolyl-tRNA(Pro) + AMP + diphosphate. Catalyzes the attachment of proline to tRNA(Pro) in a two-step reaction: proline is first activated by ATP to form Pro-AMP and then transferred to the acceptor end of tRNA(Pro). As ProRS can inadvertently accommodate and process non-cognate amino acids such as alanine and cysteine, to avoid such errors it has two additional distinct editing activities against alanine. One activity is designated as 'pretransfer' editing and involves the tRNA(Pro)-independent hydrolysis of activated Ala-AMP. The other activity is designated 'posttransfer' editing and involves deacylation of mischarged Ala-tRNA(Pro). The misacylated Cys-tRNA(Pro) is not edited by ProRS. This is Proline--tRNA ligase from Streptococcus sanguinis (strain SK36).